The sequence spans 233 residues: Ras-related protein Rab-20 (233 aa).

GTP contacts are provided by G17, K18, T19, D32, and T36. Residue T19 coordinates Mg(2+). 2 short sequence motifs (switch) span residues 28–41 (RRFPDTVSTVGGAF) and 55–72 (DTAGREQFHGLGSLYCRG). T36 and D55 together coordinate Mg(2+). G58, N113, K114, and D116 together coordinate GTP. A compositionally biased stretch (basic and acidic residues) spans 119–130 (SERDTEGGEKEG). The disordered stretch occupies residues 119-138 (SERDTEGGEKEGPASGKVGS). Residues A183 and K184 each coordinate GTP. Residues C231 and C232 are each lipidated (S-geranylgeranyl cysteine).

Belongs to the small GTPase superfamily. Rab family. Requires Mg(2+) as cofactor. In terms of tissue distribution, present in a variety of tissues, but not in brain.

It localises to the cytoplasmic vesicle. The protein resides in the phagosome. The protein localises to the phagosome membrane. Its subcellular location is the golgi apparatus. The enzyme catalyses GTP + H2O = GDP + phosphate + H(+). With respect to regulation, regulated by guanine nucleotide exchange factors (GEFs) which promote the exchange of bound GDP for free GTP. Regulated by GTPase activating proteins (GAPs) which increase the GTP hydrolysis activity. Inhibited by GDP dissociation inhibitors (GDIs). Plays a role in apical endocytosis/recycling. Plays a role in the maturation and acidification of phagosomes that engulf pathogens, such as S.aureus and Mycobacterium. Plays a role in the fusion of phagosomes with lysosomes. This chain is Ras-related protein Rab-20, found in Mus musculus (Mouse).